The primary structure comprises 335 residues: tRNA pseudouridine synthase D (335 aa).

The active-site Nucleophile is the D77. One can recognise a TRUD domain in the interval 152–308 (GFPNYFTEQR…AQHLSWSFIP (157 aa)).

This sequence belongs to the pseudouridine synthase TruD family.

The catalysed reaction is uridine(13) in tRNA = pseudouridine(13) in tRNA. Responsible for synthesis of pseudouridine from uracil-13 in transfer RNAs. This Histophilus somni (strain 129Pt) (Haemophilus somnus) protein is tRNA pseudouridine synthase D.